A 489-amino-acid polypeptide reads, in one-letter code: Cytochrome P450-DIT2 (489 aa).

Residue Cys435 coordinates heme.

The protein belongs to the cytochrome P450 family. The cofactor is heme.

Functionally, involved in spore wall maturation. Thought to catalyze the oxidation of tyrosine residues in the formation of LL-dityrosine a precursor of the spore wall. This is Cytochrome P450-DIT2 (DIT2) from Saccharomyces cerevisiae (strain ATCC 204508 / S288c) (Baker's yeast).